A 209-amino-acid polypeptide reads, in one-letter code: Dual specificity phosphatase 29 (209 aa).

The Tyrosine-protein phosphatase domain occupies 44-193; that stretch reads NHVNEVWPNL…LRELDIQLAL (150 aa). 137 to 144 provides a ligand contact to substrate; sequence NCAMGRSR. Catalysis depends on Cys138, which acts as the Phosphocysteine intermediate.

The protein belongs to the protein-tyrosine phosphatase family. Non-receptor class dual specificity subfamily.

Its subcellular location is the cytoplasm. It is found in the nucleus. The enzyme catalyses O-phospho-L-tyrosyl-[protein] + H2O = L-tyrosyl-[protein] + phosphate. The catalysed reaction is O-phospho-L-seryl-[protein] + H2O = L-seryl-[protein] + phosphate. It carries out the reaction O-phospho-L-threonyl-[protein] + H2O = L-threonyl-[protein] + phosphate. Functionally, dual specificity phosphatase able to dephosphorylate phosphotyrosine, phosphoserine and phosphothreonine residues within the same substrate, with a preference for phosphotyrosine as a substrate. Involved in the modulation of AMPK and MAPK1/2 signaling pathways. This is Dual specificity phosphatase 29 (dusp29) from Xenopus tropicalis (Western clawed frog).